A 313-amino-acid polypeptide reads, in one-letter code: Olfactory receptor 8C8 (313 aa).

Over 1-27 the chain is Extracellular; it reads MMQITMENKSSVSEFILMGLTDQPELQ. N-linked (GlcNAc...) asparagine glycosylation is present at asparagine 8. A helical transmembrane segment spans residues 28 to 48; it reads LPLFVLFLMNYTATVMGNLTL. Residues 49 to 59 are Cytoplasmic-facing; that stretch reads MNLICLNSNLH. The helical transmembrane segment at 60 to 80 threads the bilayer; the sequence is TPMYFFLFNLSFIDFCYSMVF. Residues 81–96 lie on the Extracellular side of the membrane; sequence TPKMLMSFILEKNTIS. The helical transmembrane segment at 97–117 threads the bilayer; sequence FGGCMAQLFFFLFFVNSESYV. An intrachain disulfide couples cysteine 100 to cysteine 192. Over 118-136 the chain is Cytoplasmic; the sequence is LTAMAYDRYVAICKPLTYK. A helical membrane pass occupies residues 137–157; that stretch reads VIMSPKICCLLIFSSYLMGFA. Residues 158–208 lie on the Extracellular side of the membrane; sequence SAMAHTGCMIRLSFCDSNIINHYMCDIFPLLPLSCSSTYVNELMSSVVVGS. Residues 209-229 traverse the membrane as a helical segment; that stretch reads AIILCCLIILISYAMILFNII. Residues 230–239 lie on the Cytoplasmic side of the membrane; sequence HMSSGKGWSK. Residues 240–260 form a helical membrane-spanning segment; the sequence is ALGTCGSHIITVSLFYGSGLL. Topologically, residues 261–274 are extracellular; that stretch reads AYVKPSSAKTVGQG. A helical membrane pass occupies residues 275–295; the sequence is KFFSVFYTLLVPMLNPLIYSL. Topologically, residues 296-313 are cytoplasmic; sequence RNKDVKLAVKKTWKRITS.

The protein belongs to the G-protein coupled receptor 1 family. In terms of tissue distribution, expressed in neurons in the olfactory epithelium.

It is found in the cell membrane. In terms of biological role, potential odorant receptor. In Mus musculus (Mouse), this protein is Olfactory receptor 8C8.